The following is a 540-amino-acid chain: Berberine bridge enzyme-like 16 (540 aa).

The N-terminal stretch at 1 to 24 (MKFWSRPLTFLIIIIYLIIQQVNS) is a signal peptide. A disulfide bridge links Cys-38 with Cys-101. Residue Asn-59 is glycosylated (N-linked (GlcNAc...) asparagine). Residues 79-254 (STRKPEVIVA…LAWKIKLVRV (176 aa)) enclose the FAD-binding PCMH-type domain. A cross-link (6-(S-cysteinyl)-8alpha-(pros-histidyl)-FAD (His-Cys)) is located at residues 116-178 (HDYEGFSYTS…KVHAFPAGVC (63 aa)). 2 N-linked (GlcNAc...) asparagine glycosylation sites follow: Asn-325 and Asn-496.

Belongs to the oxygen-dependent FAD-linked oxidoreductase family. The cofactor is FAD. The FAD cofactor is bound via a bicovalent 6-S-cysteinyl, 8alpha-N1-histidyl FAD linkage.

The protein resides in the secreted. It is found in the cell wall. The sequence is that of Berberine bridge enzyme-like 16 from Arabidopsis thaliana (Mouse-ear cress).